We begin with the raw amino-acid sequence, 485 residues long: Rhamnulokinase (485 aa).

An ATP-binding site is contributed by 11–15 (ASSGR). Substrate contacts are provided by residues Ala79 and 234–236 (HDT). The active-site Proton acceptor is Asp235. Thr257 provides a ligand contact to ATP. Residue Asn294 coordinates substrate. The ATP site is built by Gln302 and Gly401.

The protein belongs to the rhamnulokinase family. The cofactor is Mg(2+).

It catalyses the reaction L-rhamnulose + ATP = L-rhamnulose 1-phosphate + ADP + H(+). It participates in carbohydrate degradation; L-rhamnose degradation; glycerone phosphate from L-rhamnose: step 2/3. Functionally, involved in the catabolism of L-rhamnose (6-deoxy-L-mannose). Catalyzes the transfer of the gamma-phosphate group from ATP to the 1-hydroxyl group of L-rhamnulose to yield L-rhamnulose 1-phosphate. The chain is Rhamnulokinase from Ligilactobacillus salivarius (strain UCC118) (Lactobacillus salivarius).